The sequence spans 122 residues: Ribosome-binding factor A (122 aa).

This sequence belongs to the RbfA family. Monomer. Binds 30S ribosomal subunits, but not 50S ribosomal subunits or 70S ribosomes.

It localises to the cytoplasm. Its function is as follows. One of several proteins that assist in the late maturation steps of the functional core of the 30S ribosomal subunit. Associates with free 30S ribosomal subunits (but not with 30S subunits that are part of 70S ribosomes or polysomes). Required for efficient processing of 16S rRNA. May interact with the 5'-terminal helix region of 16S rRNA. This is Ribosome-binding factor A from Geotalea uraniireducens (strain Rf4) (Geobacter uraniireducens).